The chain runs to 273 residues: Ribosomal RNA small subunit methyltransferase A (273 aa).

Positions 18, 20, 45, 66, 91, and 113 each coordinate S-adenosyl-L-methionine.

Belongs to the class I-like SAM-binding methyltransferase superfamily. rRNA adenine N(6)-methyltransferase family. RsmA subfamily.

Its subcellular location is the cytoplasm. It carries out the reaction adenosine(1518)/adenosine(1519) in 16S rRNA + 4 S-adenosyl-L-methionine = N(6)-dimethyladenosine(1518)/N(6)-dimethyladenosine(1519) in 16S rRNA + 4 S-adenosyl-L-homocysteine + 4 H(+). Functionally, specifically dimethylates two adjacent adenosines (A1518 and A1519) in the loop of a conserved hairpin near the 3'-end of 16S rRNA in the 30S particle. May play a critical role in biogenesis of 30S subunits. This chain is Ribosomal RNA small subunit methyltransferase A, found in Escherichia coli O17:K52:H18 (strain UMN026 / ExPEC).